The following is a 592-amino-acid chain: Probable translation initiation factor IF-2 (592 aa).

The tr-type G domain maps to 5–226 (IRSPFVVVMG…AGVSQRFIPR (222 aa)). The segment at 14–21 (GHVDVGKT) is G1. 14–21 (GHVDVGKT) contacts GTP. A G2 region spans residues 39 to 43 (MITQH). Residues 80–83 (DTPG) are G3. GTP-binding positions include 80-84 (DTPGH) and 134-137 (NKLD). The G4 stretch occupies residues 134–137 (NKLD). The segment at 202–204 (SAV) is G5.

It belongs to the TRAFAC class translation factor GTPase superfamily. Classic translation factor GTPase family. IF-2 subfamily.

Functionally, function in general translation initiation by promoting the binding of the formylmethionine-tRNA to ribosomes. Seems to function along with eIF-2. This chain is Probable translation initiation factor IF-2, found in Pyrobaculum calidifontis (strain DSM 21063 / JCM 11548 / VA1).